The following is a 60-amino-acid chain: UPF0434 protein YcaR (60 aa).

The protein belongs to the UPF0434 family.

The polypeptide is UPF0434 protein YcaR (Salmonella agona (strain SL483)).